A 619-amino-acid chain; its full sequence is Probable galacturonosyltransferase 7 (619 aa).

Topologically, residues 1-19 (MKGGGGGGGGGGGGKRRWK) are cytoplasmic. A helical; Signal-anchor for type II membrane protein transmembrane segment spans residues 20 to 40 (VLVIGVLVLVILSMLVPLAFL). Residues 41–619 (LGLHNGFHSP…RFLSDCNVNP (579 aa)) are Lumenal-facing. N68, N106, N132, N343, and N421 each carry an N-linked (GlcNAc...) asparagine glycan. Residues 95-139 (KSDINVGSRDVNATSGTDSKKRGLPVSPTVVANPSPANKTKSEAS) are disordered. Over residues 124-139 (VVANPSPANKTKSEAS) the composition is skewed to polar residues.

The protein belongs to the glycosyltransferase 8 family. Expressed in roots, inflorescences, flowers, siliques, leaves and stems.

It localises to the golgi apparatus membrane. The protein operates within glycan metabolism; pectin biosynthesis. Functionally, may be involved in pectin biosynthesis. In Arabidopsis thaliana (Mouse-ear cress), this protein is Probable galacturonosyltransferase 7 (GAUT7).